Reading from the N-terminus, the 307-residue chain is UPF0276 protein Bphyt_5128 (307 aa).

It belongs to the UPF0276 family.

The polypeptide is UPF0276 protein Bphyt_5128 (Paraburkholderia phytofirmans (strain DSM 17436 / LMG 22146 / PsJN) (Burkholderia phytofirmans)).